The sequence spans 436 residues: Enolase (436 aa).

Gln167 contributes to the (2R)-2-phosphoglycerate binding site. Glu209 serves as the catalytic Proton donor. Mg(2+)-binding residues include Asp246, Glu291, and Asp318. (2R)-2-phosphoglycerate contacts are provided by Lys343, Arg372, Ser373, and Lys394. Lys343 serves as the catalytic Proton acceptor.

The protein belongs to the enolase family. As to quaternary structure, component of the RNA degradosome, a multiprotein complex involved in RNA processing and mRNA degradation. Requires Mg(2+) as cofactor.

Its subcellular location is the cytoplasm. It is found in the secreted. The protein localises to the cell surface. The catalysed reaction is (2R)-2-phosphoglycerate = phosphoenolpyruvate + H2O. Its pathway is carbohydrate degradation; glycolysis; pyruvate from D-glyceraldehyde 3-phosphate: step 4/5. Its function is as follows. Catalyzes the reversible conversion of 2-phosphoglycerate (2-PG) into phosphoenolpyruvate (PEP). It is essential for the degradation of carbohydrates via glycolysis. The polypeptide is Enolase (Haemophilus influenzae (strain PittGG)).